Reading from the N-terminus, the 100-residue chain is Small ribosomal subunit protein uS14c (100 aa).

The protein belongs to the universal ribosomal protein uS14 family. Part of the 30S ribosomal subunit.

It is found in the plastid. The protein localises to the chloroplast. Its function is as follows. Binds 16S rRNA, required for the assembly of 30S particles. This Lepidium virginicum (Virginia pepperweed) protein is Small ribosomal subunit protein uS14c.